Here is a 41-residue protein sequence, read N- to C-terminus: Large ribosomal subunit protein bL36 (41 aa).

This sequence belongs to the bacterial ribosomal protein bL36 family.

The polypeptide is Large ribosomal subunit protein bL36 (Parvibaculum lavamentivorans (strain DS-1 / DSM 13023 / NCIMB 13966)).